Reading from the N-terminus, the 430-residue chain is tRNA-2-methylthio-N(6)-dimethylallyladenosine synthase (430 aa).

In terms of domain architecture, MTTase N-terminal spans 1–110; sequence MKVHIFTYGC…VPDAVLNAKN (110 aa). 6 residues coordinate [4Fe-4S] cluster: cysteine 10, cysteine 46, cysteine 75, cysteine 146, cysteine 150, and cysteine 153. Residues 132–363 enclose the Radical SAM core domain; sequence RSSNHHAWVT…LNLQKTINKE (232 aa). Residues 366 to 427 form the TRAM domain; that stretch reads KSYLGKEVEV…AGPLYGEIKK (62 aa).

This sequence belongs to the methylthiotransferase family. MiaB subfamily. As to quaternary structure, monomer. [4Fe-4S] cluster is required as a cofactor.

It localises to the cytoplasm. The catalysed reaction is N(6)-dimethylallyladenosine(37) in tRNA + (sulfur carrier)-SH + AH2 + 2 S-adenosyl-L-methionine = 2-methylsulfanyl-N(6)-dimethylallyladenosine(37) in tRNA + (sulfur carrier)-H + 5'-deoxyadenosine + L-methionine + A + S-adenosyl-L-homocysteine + 2 H(+). In terms of biological role, catalyzes the methylthiolation of N6-(dimethylallyl)adenosine (i(6)A), leading to the formation of 2-methylthio-N6-(dimethylallyl)adenosine (ms(2)i(6)A) at position 37 in tRNAs that read codons beginning with uridine. The protein is tRNA-2-methylthio-N(6)-dimethylallyladenosine synthase of Fervidobacterium nodosum (strain ATCC 35602 / DSM 5306 / Rt17-B1).